A 38-amino-acid chain; its full sequence is Large ribosomal subunit protein bL36 (38 aa).

This sequence belongs to the bacterial ribosomal protein bL36 family.

The chain is Large ribosomal subunit protein bL36 from Aster yellows witches'-broom phytoplasma (strain AYWB).